Here is a 128-residue protein sequence, read N- to C-terminus: UPF0102 protein MAV_3752 (128 aa).

The protein belongs to the UPF0102 family.

In Mycobacterium avium (strain 104), this protein is UPF0102 protein MAV_3752.